A 272-amino-acid polypeptide reads, in one-letter code: 4-hydroxy-tetrahydrodipicolinate reductase (272 aa).

Residues 11-16 (GAGGRM) and glutamate 37 contribute to the NAD(+) site. Arginine 38 serves as a coordination point for NADP(+). NAD(+) contacts are provided by residues 101 to 103 (GTT) and 125 to 128 (AANF). Histidine 158 serves as the catalytic Proton donor/acceptor. Residue histidine 159 coordinates (S)-2,3,4,5-tetrahydrodipicolinate. The active-site Proton donor is the lysine 162. 168–169 (GT) serves as a coordination point for (S)-2,3,4,5-tetrahydrodipicolinate.

Belongs to the DapB family. In terms of assembly, homotetramer.

Its subcellular location is the cytoplasm. The enzyme catalyses (S)-2,3,4,5-tetrahydrodipicolinate + NAD(+) + H2O = (2S,4S)-4-hydroxy-2,3,4,5-tetrahydrodipicolinate + NADH + H(+). It carries out the reaction (S)-2,3,4,5-tetrahydrodipicolinate + NADP(+) + H2O = (2S,4S)-4-hydroxy-2,3,4,5-tetrahydrodipicolinate + NADPH + H(+). It participates in amino-acid biosynthesis; L-lysine biosynthesis via DAP pathway; (S)-tetrahydrodipicolinate from L-aspartate: step 4/4. Catalyzes the conversion of 4-hydroxy-tetrahydrodipicolinate (HTPA) to tetrahydrodipicolinate. In Edwardsiella ictaluri (strain 93-146), this protein is 4-hydroxy-tetrahydrodipicolinate reductase.